We begin with the raw amino-acid sequence, 223 residues long: Cutinase (223 aa).

Positions 1 to 19 (MKFFAFSMLIGEASPIVLA) are cleaved as a signal peptide. The cysteines at positions 46 and 124 are disulfide-linked. Ser-135 acts as the Nucleophile in catalysis. A disulfide bridge links Cys-185 with Cys-192. Residue Asp-189 is part of the active site. The active-site Proton donor/acceptor is the His-202.

This sequence belongs to the cutinase family. The 2 disulfide bonds play a critical role in holding the catalytic residues in juxta-position; reduction of the disulfide bridges results in the complete inactivation of the enzyme.

The protein localises to the secreted. The enzyme catalyses cutin + H2O = cutin monomers.. Functionally, catalyzes the hydrolysis of complex carboxylic polyesters found in the cell wall of plants. Degrades cutin, a macromolecule that forms the structure of the plant cuticle. Allows pathogenic fungi to penetrate through the cuticular barrier into the host plant during the initial stage of fungal infection. This Didymella rabiei (Chickpea ascochyta blight fungus) protein is Cutinase (CUT).